The primary structure comprises 701 residues: DNA ligase (701 aa).

Residues 58-62, 107-108, and Glu-138 contribute to the NAD(+) site; these read DYEYD and SL. Residue Lys-140 is the N6-AMP-lysine intermediate of the active site. Positions 161, 199, 323, and 347 each coordinate NAD(+). The Zn(2+) site is built by Cys-441, Cys-444, Cys-459, and Cys-464. One can recognise a BRCT domain in the interval 621-701; the sequence is EKRGKLAGLN…EEFLKMIGQQ (81 aa).

It belongs to the NAD-dependent DNA ligase family. LigA subfamily. Mg(2+) is required as a cofactor. The cofactor is Mn(2+).

The enzyme catalyses NAD(+) + (deoxyribonucleotide)n-3'-hydroxyl + 5'-phospho-(deoxyribonucleotide)m = (deoxyribonucleotide)n+m + AMP + beta-nicotinamide D-nucleotide.. DNA ligase that catalyzes the formation of phosphodiester linkages between 5'-phosphoryl and 3'-hydroxyl groups in double-stranded DNA using NAD as a coenzyme and as the energy source for the reaction. It is essential for DNA replication and repair of damaged DNA. In Sulfurihydrogenibium azorense (strain DSM 15241 / OCM 825 / Az-Fu1), this protein is DNA ligase.